We begin with the raw amino-acid sequence, 230 residues long: 5'-methylthioadenosine/S-adenosylhomocysteine nucleosidase (230 aa).

E12 acts as the Proton acceptor in catalysis. Substrate-binding positions include G78, I153, and 174–175; that span reads ME. D198 serves as the catalytic Proton donor.

Belongs to the PNP/UDP phosphorylase family. MtnN subfamily.

The enzyme catalyses S-adenosyl-L-homocysteine + H2O = S-(5-deoxy-D-ribos-5-yl)-L-homocysteine + adenine. It carries out the reaction S-methyl-5'-thioadenosine + H2O = 5-(methylsulfanyl)-D-ribose + adenine. The catalysed reaction is 5'-deoxyadenosine + H2O = 5-deoxy-D-ribose + adenine. It participates in amino-acid biosynthesis; L-methionine biosynthesis via salvage pathway; S-methyl-5-thio-alpha-D-ribose 1-phosphate from S-methyl-5'-thioadenosine (hydrolase route): step 1/2. Functionally, catalyzes the irreversible cleavage of the glycosidic bond in both 5'-methylthioadenosine (MTA) and S-adenosylhomocysteine (SAH/AdoHcy) to adenine and the corresponding thioribose, 5'-methylthioribose and S-ribosylhomocysteine, respectively. Also cleaves 5'-deoxyadenosine, a toxic by-product of radical S-adenosylmethionine (SAM) enzymes, into 5-deoxyribose and adenine. In Shewanella sediminis (strain HAW-EB3), this protein is 5'-methylthioadenosine/S-adenosylhomocysteine nucleosidase.